Reading from the N-terminus, the 236-residue chain is MHITQLNRECLLCLFSFLDKDSRRSLSRTCSQLRDVFEDPTLWPLLHFHSLAELKKDNFRLSPALRSLSICWHSSRVQVCSIEDWLKSALQRSICSQHESLVNDFLLQVCNRCPNLTSVTLSGCGHVTDDCLARLLLSCPRLRTLRLENCARVTNRTLAAVAAHGRALQTLHVDFCRNVSAAGLLRLRAACPNLRLSAERSAAMIPDQPPRARVCAASAFSAAPGRQSMPHPTGSY.

The F-box domain maps to 1-46 (MHITQLNRECLLCLFSFLDKDSRRSLSRTCSQLRDVFEDPTLWPLL). LRR repeat units lie at residues 15–40 (FSFL…FEDP), 43–72 (WPLL…SICW), 98–123 (HESL…TLSG), 124–149 (CGHV…RLEN), 150–175 (CARV…HVDF), and 176–201 (CRNV…AERS).

In terms of assembly, directly interacts with SKP1 and CUL1. As to expression, enriched in cardiac muscle (at protein level).

It localises to the cytoplasm. Its subcellular location is the myofibril. The protein localises to the sarcomere. It is found in the z line. It functions in the pathway protein modification; protein ubiquitination. Its function is as follows. Substrate-recognition component of the SCF (SKP1-CUL1-F-box protein)-type E3 ubiquitin ligase complex. Promotes ubiquitination of sarcomeric proteins alpha-actinin-2 (ACTN2) and filamin-C (FLNC). This chain is F-box and leucine-rich protein 22 (Fbxl22), found in Mus musculus (Mouse).